Consider the following 86-residue polypeptide: Acyl-CoA-binding protein homolog 1 (86 aa).

In terms of domain architecture, ACB spans 1 to 86 (MTLSFDDAAA…VEELIAKYGA (86 aa)). An acyl-CoA contacts are provided by residues K13, 28 to 32 (YALFK), K50, K54, and Y73.

This sequence belongs to the ACBP family.

Functionally, binds medium- and long-chain acyl-CoA esters with very high affinity and may function as an intracellular carrier of acyl-CoA esters. The chain is Acyl-CoA-binding protein homolog 1 (acbp-1) from Caenorhabditis elegans.